The primary structure comprises 382 residues: Beta-lactamase CMY-10 (382 aa).

The first 23 residues, methionine 1 to alanine 23, serve as a signal peptide directing secretion. Serine 88 functions as the Acyl-ester intermediate in the catalytic mechanism. An AMP-binding site is contributed by serine 88. Residues serine 88, glutamine 144, tyrosine 174, threonine 336, serine 338, and asparagine 363 each coordinate GMP. IMP contacts are provided by serine 88, glutamine 144, tyrosine 174, threonine 336, serine 338, and asparagine 363. Tyrosine 174 serves as a coordination point for AMP. Serine 338 contacts AMP.

The protein belongs to the class-C beta-lactamase family. Monomer.

The catalysed reaction is a beta-lactam + H2O = a substituted beta-amino acid. Inhibited by various nucleotides in vitro, including adenosine 5'-(P-acetyl)monophosphate (acAMP), inosine-5'-monophosphate (IMP) and guanosine-5'-monophosphate (GMP); IMP and GMP exhibit strongest competitive inhibition. Inhibited by the beta-lactamase-blocking agent, avibactam. Inhibited by clavulanic acid. Weakly inhibited by citric acid. In terms of biological role, class C beta-lactamase which confers resistance to penicillins and cephalosporins. Has benzylpenicillin-, ceftazidime-, nitrocefin- and imipenem-hydrolyzing activity. The sequence is that of Beta-lactamase CMY-10 from Klebsiella aerogenes (Enterobacter aerogenes).